A 204-amino-acid polypeptide reads, in one-letter code: Endothelin-3 (204 aa).

The signal sequence occupies residues 1-17; it reads MELRLWFLFGLTVTSAA. Residues 18–71 are disordered; that stretch reads GPVPRPQPGDAGRSGVPRAPSATKETMAMVATRGPSPRSSGQEQEPGPFGELAA. A propeptide spanning residues 18 to 80 is cleaved from the precursor; that stretch reads GPVPRPQPGD…AKGGPVRYRA (63 aa). 2 disulfides stabilise this stretch: C83/C97 and C85/C93. Residues 104–204 constitute a propeptide that is removed on maturation; that stretch reads INTPERTVPY…KSRTDKARRL (101 aa). The disordered stretch occupies residues 115–140; that stretch reads LSNHRGSVRGRRSAGPSPQSSQPSRG. A compositionally biased stretch (low complexity) spans 127–140; that stretch reads SAGPSPQSSQPSRG. The tract at residues 144-158 is endothelin-like; that stretch reads CACAESQDRACVYFC. The interval 166–204 is disordered; sequence GASRTPETPDKEAGKPAGRATGGLHPRRLKSRTDKARRL.

It belongs to the endothelin/sarafotoxin family.

It is found in the secreted. Its function is as follows. Endothelins are endothelium-derived vasoconstrictor peptides. In Sus scrofa (Pig), this protein is Endothelin-3 (EDN3).